Reading from the N-terminus, the 929-residue chain is ATP-dependent DNA helicase PIF1 (929 aa).

Residues methionine 1 to phenylalanine 52 constitute a mitochondrion transit peptide. A disordered region spans residues glycine 55–threonine 89. Residues threonine 56–arginine 66 are compositionally biased toward basic and acidic residues. Positions alanine 74–threonine 89 are enriched in polar residues. Glycine 302 to threonine 309 lines the ATP pocket. The DNA-binding element occupies histidine 776 to phenylalanine 796. Positions histidine 902–glutamate 929 are disordered. Residues glutamine 916–glutamate 929 are compositionally biased toward polar residues.

This sequence belongs to the helicase family. PIF1 subfamily. As to quaternary structure, monomer. It depends on Mg(2+) as a cofactor.

The protein resides in the mitochondrion. It catalyses the reaction Couples ATP hydrolysis with the unwinding of duplex DNA at the replication fork by translocating in the 5'-3' direction. This creates two antiparallel DNA single strands (ssDNA). The leading ssDNA polymer is the template for DNA polymerase III holoenzyme which synthesizes a continuous strand.. It carries out the reaction ATP + H2O = ADP + phosphate + H(+). Its function is as follows. DNA-dependent ATPase and probable 5'-3' DNA helicase required for the maintenance of mitochondrial (kinetoplast) genome stability. Essential for replication of kinetoplast minicircles. Involved in the segregation of minicircle progeny. This is ATP-dependent DNA helicase PIF1 from Trypanosoma brucei brucei (strain 927/4 GUTat10.1).